Here is a 505-residue protein sequence, read N- to C-terminus: 2,3-bisphosphoglycerate-independent phosphoglycerate mutase (505 aa).

Mn(2+)-binding residues include aspartate 13 and serine 63. The active-site Phosphoserine intermediate is the serine 63. Residues histidine 124, 153–154, arginine 183, arginine 189, 254–257, and lysine 329 each bind substrate; these read RD and RADR. Mn(2+) contacts are provided by aspartate 395, histidine 399, aspartate 436, histidine 437, and histidine 455.

It belongs to the BPG-independent phosphoglycerate mutase family. As to quaternary structure, monomer. Requires Mn(2+) as cofactor.

It catalyses the reaction (2R)-2-phosphoglycerate = (2R)-3-phosphoglycerate. The protein operates within carbohydrate degradation; glycolysis; pyruvate from D-glyceraldehyde 3-phosphate: step 3/5. Its function is as follows. Catalyzes the interconversion of 2-phosphoglycerate and 3-phosphoglycerate. The polypeptide is 2,3-bisphosphoglycerate-independent phosphoglycerate mutase (Agrobacterium fabrum (strain C58 / ATCC 33970) (Agrobacterium tumefaciens (strain C58))).